Consider the following 413-residue polypeptide: Serine hydroxymethyltransferase (413 aa).

Residues Leu119 and 123-125 (GHL) contribute to the (6S)-5,6,7,8-tetrahydrofolate site. Residue Lys228 is modified to N6-(pyridoxal phosphate)lysine.

This sequence belongs to the SHMT family. In terms of assembly, homodimer. Pyridoxal 5'-phosphate is required as a cofactor.

It is found in the cytoplasm. It carries out the reaction (6R)-5,10-methylene-5,6,7,8-tetrahydrofolate + glycine + H2O = (6S)-5,6,7,8-tetrahydrofolate + L-serine. It participates in one-carbon metabolism; tetrahydrofolate interconversion. The protein operates within amino-acid biosynthesis; glycine biosynthesis; glycine from L-serine: step 1/1. Functionally, catalyzes the reversible interconversion of serine and glycine with tetrahydrofolate (THF) serving as the one-carbon carrier. This reaction serves as the major source of one-carbon groups required for the biosynthesis of purines, thymidylate, methionine, and other important biomolecules. Also exhibits THF-independent aldolase activity toward beta-hydroxyamino acids, producing glycine and aldehydes, via a retro-aldol mechanism. The sequence is that of Serine hydroxymethyltransferase from Desulfatibacillum aliphaticivorans.